The sequence spans 289 residues: Protoheme IX farnesyltransferase (289 aa).

Transmembrane regions (helical) follow at residues 9-29 (VALM…PVMM), 35-55 (MPSL…AGSA), 89-109 (LTFG…LVNW), 110-130 (PSAL…TLGL), 138-158 (IVIG…AVTG), 164-184 (AVLL…ALAM), 188-208 (DDYA…EVVT), 228-248 (VAHT…WFLA), and 269-289 (FHMS…TAVV).

This sequence belongs to the UbiA prenyltransferase family. Protoheme IX farnesyltransferase subfamily.

Its subcellular location is the cell membrane. It catalyses the reaction heme b + (2E,6E)-farnesyl diphosphate + H2O = Fe(II)-heme o + diphosphate. The protein operates within porphyrin-containing compound metabolism; heme O biosynthesis; heme O from protoheme: step 1/1. Its function is as follows. Converts heme B (protoheme IX) to heme O by substitution of the vinyl group on carbon 2 of heme B porphyrin ring with a hydroxyethyl farnesyl side group. In Frankia alni (strain DSM 45986 / CECT 9034 / ACN14a), this protein is Protoheme IX farnesyltransferase.